Reading from the N-terminus, the 888-residue chain is Transmembrane channel-like protein 2 (888 aa).

The interval 1–128 (MSPQLKSLDE…SLGSSVSTGD (128 aa)) is disordered. Residues 1-228 (MSPQLKSLDE…KIKDIESHFG (228 aa)) lie on the Cytoplasmic side of the membrane. Composition is skewed to basic and acidic residues over residues 7-16 (SLDEEGDKSA), 32-44 (DGHR…KDPA), and 87-110 (RTSL…EAGK). Residues 117–128 (STSLGSSVSTGD) show a composition bias toward polar residues. Residues 229 to 266 (SSVASYFIFLRWMYGVNLVLFGLIFGLVIIPEVLMGMP) traverse the membrane as a helical segment. Residues 267–317 (YGSIPRKTVPRAEEERAMDFSVLWDFEGYIKYSALFYGYYNNQRTIGWLRY) lie on the Extracellular side of the membrane. Residues 318 to 350 (RLPMAYFMVGVSVFGYSLMIVIRSMASNTQGST) traverse the membrane as a helical segment. Topologically, residues 351 to 406 (SEGDSDSFTFSFKMFTSWDYLIGNSETADNKYVSITTSFKESIVDEQESNKEGNIH) are cytoplasmic. Residues 407 to 437 (LTRFLRVLANFLILCCLCGSGYLIYFVVKRS) traverse the membrane as a helical segment. Over 438–447 (QEFSKMQNVS) the chain is Extracellular. A helical membrane pass occupies residues 448 to 475 (WYERNEVEIVMSLLGMFCPPLFETIAAL). Topologically, residues 476–479 (ENYH) are cytoplasmic. The chain crosses the membrane as a helical span at residues 480 to 514 (PRTGLKWQLGRIFALFLGNLYTFLLALMDDVHLKL). Over 515–556 (SNEEKIKNITHWTLFNYYNSSGGNESVPRPPPHPADVPRGSC) the chain is Extracellular. Residues 557–594 (WETAVGIEFMRLTVSDMLVTYLTILVGDFLRACFVRFM) form a helical membrane-spanning segment. Over 595–613 (NHCWCWDLEAGFPSYAEFD) the chain is Cytoplasmic. The chain crosses the membrane as a helical span at residues 614–634 (ISGNVLGLIFNQGMIWMGSFY). Topologically, residues 635–637 (APG) are extracellular. The helical transmembrane segment at 638-660 (LVGINVLRLLTSMYFQCWAVMSS) threads the bilayer. Residues 661–674 (NVPHERVFKASRSN) are Cytoplasmic-facing. A helical transmembrane segment spans residues 675 to 698 (NFYMGLLLLVLFLSLLPVAYTVMS). Residues 699–741 (LPPSFDCGPFSGKNRMYDVLHETIENDFPKFLGKIFAFLANPG) are Extracellular-facing. Residues 742-775 (LIIPAILLMFLAIYYLNSVSKSLSRANAQLRKKI) form a helical membrane-spanning segment. Residues 776–888 (QALREVEKNH…SGKRTQRPHN (113 aa)) are Cytoplasmic-facing. Positions 813–888 (LTKEEPTSHS…SGKRTQRPHN (76 aa)) are disordered. Composition is skewed to polar residues over residues 836-851 (PHTS…STSW) and 866-881 (GQPQ…PSGK).

This sequence belongs to the TMC family. As to quaternary structure, forms the MET channel composed of TMC dimer (TMC1 or TMC2), TMIE, TOMT, CIB (CIB2 or CIB3), LHFPL5 and PDH15. The interaction of TMC1 and TMC2 with TOMT is required for the transportation of TMC1/2 into the stereocilia of hair cells. Interacts (via N-terminus) with both isoforms CD1 and CD3 of PCDH15. Can form a heterodimer with TMC1, TMC5 or TMC7. Inner ear and testis. Expressed in cochlear inner and outer hair cells and vestibular organ hair cells.

The protein resides in the cell membrane. The enzyme catalyses Ca(2+)(in) = Ca(2+)(out). Functionally, pore-forming subunit of the mechanotransducer (MET) non-selective cation channel complex located at the tips of stereocilia of cochlear hair cells and that mediates sensory transduction in the auditory system. The MET complex is composed of two dimeric pore-forming ion-conducting transmembrane TMC (TMC1 or TMC2) subunits, several auxiliary proteins including LHFPL5, TMIE, CIB2/3 and TOMT, the tip-link PCDH15, and possibly the PIEZO subunits. MET channel is activated by tension in the tip-link extending from the side wall of one stereocilium to the tip of the adjacent shorter stereocilium, where the channel is located. TMC2 MET channel is highly permeable to calcium and likely transports monovalent cations. Also involved in vestibular hair cell transduction current of the mammalian inner ear. This chain is Transmembrane channel-like protein 2, found in Mus musculus (Mouse).